A 312-amino-acid polypeptide reads, in one-letter code: Dehydrogenase/reductase SDR family member 7C (312 aa).

An N-terminal signal peptide occupies residues M1–G18. NAD(+) contacts are provided by S47, L49, Y192, K196, and S227. Y192 functions as the Proton acceptor in the catalytic mechanism.

The protein belongs to the short-chain dehydrogenases/reductases (SDR) family.

It localises to the sarcoplasmic reticulum membrane. It carries out the reaction all-trans-retinol + NAD(+) = all-trans-retinal + NADH + H(+). NADH-dependent oxidoreductase which catalyzes the oxidation of all-trans-retinol to all-trans-retinal. Plays a role in the regulation of cardiac and skeletal muscle metabolic functions. Maintains Ca(2+) intracellular homeostasis by repressing Ca(2+) release from the sarcoplasmic reticulum (SR) in myotubes, possibly through local alternations in NAD/NADH or retinol/retinal. Also plays a role in Ca(2+) homeostasis by controlling Ca(2+) overload in the cytosol and the SR in myotubes. Involved in glucose uptake into skeletal muscles and muscle performance by activating PI3K and mTORC2-mediated AKT1 phosphorylation signaling pathways, possibly through the action of its downstream catalytic product all-trans-retinoic acid. The polypeptide is Dehydrogenase/reductase SDR family member 7C (Homo sapiens (Human)).